We begin with the raw amino-acid sequence, 345 residues long: Thylakoid lumenal 29 kDa protein, chloroplastic (345 aa).

Belongs to the peroxidase family.

It localises to the plastid. The protein resides in the chloroplast thylakoid lumen. This Solanum lycopersicum (Tomato) protein is Thylakoid lumenal 29 kDa protein, chloroplastic (CLEB3J9).